The primary structure comprises 587 residues: Arginine--tRNA ligase (587 aa).

The 'HIGH' region signature appears at 127 to 137 (PNLAKEMHVGH).

Belongs to the class-I aminoacyl-tRNA synthetase family. Monomer.

It is found in the cytoplasm. It carries out the reaction tRNA(Arg) + L-arginine + ATP = L-arginyl-tRNA(Arg) + AMP + diphosphate. In Pseudomonas aeruginosa (strain UCBPP-PA14), this protein is Arginine--tRNA ligase.